Reading from the N-terminus, the 307-residue chain is Putative lipid kinase SERP0390 (307 aa).

The DAGKc domain maps to Q3–Y139. ATP-binding positions include S44, G74–E80, and T101. Residues S220, D223, and R225 each contribute to the Mg(2+) site. The Proton acceptor role is filled by E281.

This sequence belongs to the diacylglycerol/lipid kinase family. Mg(2+) is required as a cofactor.

May catalyze the ATP-dependent phosphorylation of lipids other than diacylglycerol (DAG). The protein is Putative lipid kinase SERP0390 of Staphylococcus epidermidis (strain ATCC 35984 / DSM 28319 / BCRC 17069 / CCUG 31568 / BM 3577 / RP62A).